Consider the following 532-residue polypeptide: Cytochrome P450 714B2 (532 aa).

The Lumenal segment spans residues 1-2 (ME). A helical; Signal-anchor for type III membrane protein transmembrane segment spans residues 3 to 23 (VGMVVVVAAKVLVSLWCVGAC). Over 24-532 (CLAAYLYRVV…LTRVQGAYRH (509 aa)) the chain is Cytoplasmic. Cysteine 474 contributes to the heme binding site.

This sequence belongs to the cytochrome P450 family. Heme is required as a cofactor. In terms of tissue distribution, highly expressed in shoot, spikelet and uppermost internode. Detected in roots, leaves and anthers.

The protein resides in the membrane. In terms of biological role, catalyzes the 13-hydroxylation of gibberellins (GAs). Determines the ratio of GA4 and GA1. Converts GA12 into GA53. The chain is Cytochrome P450 714B2 (CYP714B2) from Oryza sativa subsp. japonica (Rice).